Here is a 657-residue protein sequence, read N- to C-terminus: Outer dense fiber protein 2 (657 aa).

Phosphoserine is present on residues Ser73 and Ser74. Thr92 carries the phosphothreonine modification. Ser95 is subject to Phosphoserine; by TSSK4. Phosphoserine is present on residues Ser106 and Ser109. Residue Thr110 is modified to Phosphothreonine. A phosphoserine mark is found at Ser115 and Ser129. Lys138 is covalently cross-linked (Glycyl lysine isopeptide (Lys-Gly) (interchain with G-Cter in SUMO2)). Ser139 is modified (phosphoserine). Coiled coils occupy residues 144–423 (QKGE…AEQL) and 461–635 (EIIV…SDLR). At Thr231 the chain carries Phosphothreonine. Residues Ser261 and Ser632 each carry the phosphoserine modification.

It belongs to the ODF2 family. In terms of assembly, self-associates. Associates with microtubules and forms a fibrillar structure partially linked to the microtubule network. Interacts via its C-terminus with PLK1. Interacts with ODF1. Interacts with MARK4; the interaction is required for localization of ODF2 to centrioles. Interacts with TSSK4. Interacts with AKNA. Interacts with CFAP58. Interacts with BBOF1. Interacts with CCDC38. Interacts with CCDC42. Post-translationally, tyrosine phosphorylated. Phosphorylated on Ser-95 by TSSK4.

It is found in the cytoplasm. The protein resides in the cytoskeleton. The protein localises to the microtubule organizing center. It localises to the centrosome. Its subcellular location is the cell projection. It is found in the cilium. The protein resides in the centriole. The protein localises to the spindle pole. It localises to the flagellum. Its function is as follows. Seems to be a major component of sperm tail outer dense fibers (ODF). ODFs are filamentous structures located on the outside of the axoneme in the midpiece and principal piece of the mammalian sperm tail and may help to maintain the passive elastic structures and elastic recoil of the sperm tail. May have a modulating influence on sperm motility. Functions as a general scaffold protein that is specifically localized at the distal/subdistal appendages of mother centrioles. Component of the centrosome matrix required for the localization of PLK1 and NIN to the centrosomes. Required for the formation and/or maintenance of normal CETN1 assembly. This Bos taurus (Bovine) protein is Outer dense fiber protein 2 (ODF2).